The chain runs to 262 residues: Probable ketoamine kinase TTHA1179 (262 aa).

ATP is bound at residue 79–81 (AYL). The active-site Proton acceptor is Asp-172.

This sequence belongs to the fructosamine kinase family.

It carries out the reaction N(6)-(D-ribulosyl)-L-lysine + ATP = N(6)-(3-O-phospho-D-ribulosyl)-L-lysine + ADP + H(+). The catalysed reaction is N(6)-(D-erythrulosyl)-L-lysine + ATP = N(6)-(3-O-phospho-D-erythrulosyl)-L-lysine + ADP + H(+). It catalyses the reaction N(6)-D-ribulosyl-L-lysyl-[protein] + ATP = N(6)-(3-O-phospho-D-ribulosyl)-L-lysyl-[protein] + ADP + H(+). The enzyme catalyses N(6)-(D-erythrulosyl)-L-lysyl-[protein] + ATP = N(6)-(3-O-phospho-D-erythrulosyl)-L-lysyl-[protein] + ADP + H(+). Ketoamine kinase that phosphorylates ketoamines, such as erythruloselysine and ribuloselysine, on the third carbon of the sugar moiety to generate ketoamine 3-phosphate. Has higher activity on free lysine (erythruloselysine and ribuloselysine), than on ribuloselysine and erythruloselysine residues on glycated proteins. The polypeptide is Probable ketoamine kinase TTHA1179 (Thermus thermophilus (strain ATCC 27634 / DSM 579 / HB8)).